Reading from the N-terminus, the 453-residue chain is Pup--protein ligase (453 aa).

A Mg(2+)-binding site is contributed by Glu9. Arg53 provides a ligand contact to ATP. Tyr55 is a Mg(2+) binding site. The Proton acceptor role is filled by Asp57. Glu63 contacts Mg(2+). 2 residues coordinate ATP: Thr66 and Trp420.

The protein belongs to the Pup ligase/Pup deamidase family. Pup-conjugating enzyme subfamily.

It carries out the reaction ATP + [prokaryotic ubiquitin-like protein]-L-glutamate + [protein]-L-lysine = ADP + phosphate + N(6)-([prokaryotic ubiquitin-like protein]-gamma-L-glutamyl)-[protein]-L-lysine.. It functions in the pathway protein degradation; proteasomal Pup-dependent pathway. The protein operates within protein modification; protein pupylation. Its function is as follows. Catalyzes the covalent attachment of the prokaryotic ubiquitin-like protein modifier Pup to the proteasomal substrate proteins, thereby targeting them for proteasomal degradation. This tagging system is termed pupylation. The ligation reaction involves the side-chain carboxylate of the C-terminal glutamate of Pup and the side-chain amino group of a substrate lysine. The sequence is that of Pup--protein ligase from Streptomyces avermitilis (strain ATCC 31267 / DSM 46492 / JCM 5070 / NBRC 14893 / NCIMB 12804 / NRRL 8165 / MA-4680).